The sequence spans 296 residues: MKAGFIAVVGRPNVGKSTLINKLVSEKVAIVSDKAGTTRDNIKGILNFKDNQYIFIDTPGIHKPQHLLGEYMTNIAVKILKDVDIILFLIDASKPIGTGDMFVMDRINENSKKPRILLVNKVDLISDEQKEEKIKEIEEKLGKFDKIIFASGMYSFGISQLLEALDPYLEDGVKYYPDDMYTDMSTYRIITEIVREKILLKTRDEIPHSVAIEIINVERKEGKKDKFDINIYVERDSQKGIIIGKDGKMLKEIGVEARKEIEELLGEKIYLGLWVKVKDDWRKKKPFLKELGYVEE.

Residues 2–171 (KAGFIAVVGR…LEALDPYLED (170 aa)) enclose the Era-type G domain. The G1 stretch occupies residues 10–17 (GRPNVGKS). 10–17 (GRPNVGKS) provides a ligand contact to GTP. The G2 stretch occupies residues 36-40 (GTTRD). The tract at residues 57 to 60 (DTPG) is G3. Residues 57–61 (DTPGI) and 120–123 (NKVD) each bind GTP. Positions 120–123 (NKVD) are G4. The interval 150 to 152 (ASG) is G5. The KH type-2 domain maps to 202–279 (TRDEIPHSVA…YLGLWVKVKD (78 aa)).

It belongs to the TRAFAC class TrmE-Era-EngA-EngB-Septin-like GTPase superfamily. Era GTPase family. As to quaternary structure, monomer.

Its subcellular location is the cytoplasm. It is found in the cell inner membrane. Its function is as follows. An essential GTPase that binds both GDP and GTP, with rapid nucleotide exchange. Plays a role in 16S rRNA processing and 30S ribosomal subunit biogenesis and possibly also in cell cycle regulation and energy metabolism. The chain is GTPase Era from Fusobacterium nucleatum subsp. nucleatum (strain ATCC 25586 / DSM 15643 / BCRC 10681 / CIP 101130 / JCM 8532 / KCTC 2640 / LMG 13131 / VPI 4355).